Here is a 712-residue protein sequence, read N- to C-terminus: Integrator complex subunit 9 homolog (712 aa).

Positions Asn47–Asn70 are enriched in low complexity. A disordered region spans residues Asn47–Ser73.

It belongs to the metallo-beta-lactamase superfamily. RNA-metabolizing metallo-beta-lactamase-like family. INTS9 subfamily. Component of the Integrator complex. The core complex associates with protein phosphatase 2A subunits, to form the Integrator-PP2A (INTAC) complex.

It is found in the nucleus. The protein localises to the cytoplasm. In terms of biological role, component of the integrator complex, a multiprotein complex that terminates RNA polymerase II (Pol II) transcription in the promoter-proximal region of genes. The integrator complex provides a quality checkpoint during transcription elongation by driving premature transcription termination of transcripts that are unfavorably configured for transcriptional elongation: the complex terminates transcription by (1) catalyzing dephosphorylation of the C-terminal domain (CTD) of Pol II subunit polr2a, (2) degrading the exiting nascent RNA transcript via endonuclease activity and (3) promoting the release of Pol II from bound DNA. The integrator complex is also involved in terminating the synthesis of non-coding Pol II transcripts, such as enhancer RNAs (eRNAs), small nuclear RNAs (snRNAs), telomerase RNAs and long non-coding RNAs (lncRNAs). The polypeptide is Integrator complex subunit 9 homolog (ints9) (Dictyostelium discoideum (Social amoeba)).